The sequence spans 612 residues: Baeyer-Villiger monooxygenase 4 (612 aa).

FAD is bound by residues glutamate 99, 107-110, aspartate 119, tyrosine 125, and alanine 169; that span reads TWYW. Residue 117–119 coordinates NADP(+); it reads QCD. NADP(+)-binding positions include 253–259, 276–277, and 393–394; these read TGATGVQ, RT, and KR.

Belongs to the FAD-binding monooxygenase family. FAD is required as a cofactor.

Catalyzes a Baeyer-Villiger oxidation reaction, i.e. the insertion of an oxygen atom into a carbon-carbon bond adjacent to a carbonyl, which converts ketones to esters or lactones using NADPH as an electron donor. Has a broad substrate scope and oxidizes different compounds including substituted and unsubstituted alicyclic, bicyclic-, aliphatic-ketones, ketones with an aromatic moiety, and sulfides. The highest activities are measured for 2- and 3-methylcyclohexanone, phenylacetone, bicyclo[3.2.0]hept-2-en-6-one and menthone. Cannot use NADH instead of NADPH. Is not active on benzaldehyde. The protein is Baeyer-Villiger monooxygenase 4 of Dietzia sp. (strain D5).